The following is a 295-amino-acid chain: Cutinase 11 (295 aa).

The signal sequence occupies residues 1–17; it reads MQTSALLLAAQALVASA. A disulfide bond links Cys25 and Cys102. Catalysis depends on residues Ser113, Asp198, and His210. Cys184 and Cys202 are oxidised to a cystine. The interval 228-258 is disordered; it reads KLNSGGSPPTTPPTTPPTTPPTTPPTTPPPS. Over residues 236-258 the composition is skewed to pro residues; sequence PTTPPTTPPTTPPTTPPTTPPPS. The CBM1 domain occupies 260–295; it reads SCAALYGQCGGQGWNGATCCSQGTCRASNQWYSQCL.

This sequence belongs to the cutinase family. In terms of processing, the 2 disulfide bonds play a critical role in holding the catalytic residues in juxta-position; reduction of the disulfide bridges results in the complete inactivation of the enzyme.

It is found in the secreted. The catalysed reaction is cutin + H2O = cutin monomers.. In terms of biological role, catalyzes the hydrolysis of complex carboxylic polyesters found in the cell wall of plants. May degrade cutin, a macromolecule that forms the structure of the plant cuticle. May also degrade suberin, a specialized macromolecule found in the cell wall of various plant tissues. Allows pathogenic fungi to penetrate through the cuticular barrier into the host plant during the initial stage of fungal infection. Involved in pathogenesis. This is Cutinase 11 from Verticillium dahliae (Verticillium wilt).